The primary structure comprises 904 residues: Serine/arginine repetitive matrix protein 1 (904 aa).

M1 carries the N-acetylmethionine modification. The tract at residues 1 to 151 (MDAGFFRGTS…ASMKKQDEDK (151 aa)) is necessary for DNA and RNA-binding. A necessary for mRNA 3'-end cleavage and cytoplasmic accumulation region spans residues 1-156 (MDAGFFRGTS…QDEDKDKRDK (156 aa)). A Citrulline modification is found at R7. One can recognise a PWI domain in the interval 27 to 126 (QLKFAECLEK…AGIPSAFLEL (100 aa)). Residue K127 forms a Glycyl lysine isopeptide (Lys-Gly) (interchain with G-Cter in SUMO2) linkage. A compositionally biased stretch (basic and acidic residues) spans 139–170 (EKLASMKKQDEDKDKRDKEEKESSREKRERSR). Residues 139–904 (EKLASMKKQD…MRKAQVSPQS (766 aa)) form a disordered region. Residue K140 is modified to N6-acetyllysine. The span at 171–207 (SPRRRKSRSPSPRRRSSPVRRERKRSHSRSPRHRTKS) shows a compositional bias: basic residues. Residues 214 to 234 (PEKKEKTPELPEPSVKVKEPS) are compositionally biased toward basic and acidic residues. Residue T220 is modified to Phosphothreonine. S227 carries the phosphoserine modification. K231 participates in a covalent cross-link: Glycyl lysine isopeptide (Lys-Gly) (interchain with G-Cter in SUMO1); alternate. K231 is covalently cross-linked (Glycyl lysine isopeptide (Lys-Gly) (interchain with G-Cter in SUMO2); alternate). Residues S234 and S240 each carry the phosphoserine modification. A Phosphothreonine modification is found at T241. Over residues 246-275 (KVPKPEPIPEPKEPSPEKNSKKEKEKEKTR) the composition is skewed to basic and acidic residues. A Glycyl lysine isopeptide (Lys-Gly) (interchain with G-Cter in SUMO2) cross-link involves residue K249. Phosphoserine is present on S260. 2 stretches are compositionally biased toward basic residues: residues 276–329 (PRSR…RTPP) and 336–351 (PRHR…RRRS). Residues 300 to 688 (RRHRSRSRSY…NKRHSPSPRP (389 aa)) form a necessary for speckles and matrix localization region. A compositionally biased stretch (low complexity) spans 352–368 (SASLSGSSSSSSSSRSR). 4 positions are modified to phosphoserine: S389, S391, S393, and S402. Phosphothreonine is present on T406. S414 carries the post-translational modification Phosphoserine. T416 is modified (phosphothreonine). Phosphoserine is present on residues S420, S429, S431, and S436. The span at 428–438 (VSVSPGRTSGK) shows a compositional bias: polar residues. K447 participates in a covalent cross-link: Glycyl lysine isopeptide (Lys-Gly) (interchain with G-Cter in SUMO2). A phosphoserine mark is found at S450 and S452. A Glycyl lysine isopeptide (Lys-Gly) (interchain with G-Cter in SUMO2) cross-link involves residue K459. A phosphoserine mark is found at S463 and S465. K472 participates in a covalent cross-link: Glycyl lysine isopeptide (Lys-Gly) (interchain with G-Cter in SUMO2). S478 carries the post-translational modification Phosphoserine. Residues 478–501 (SVQQRRQYRRQNQQSSSDSGSSSS) are compositionally biased toward low complexity. Over residues 503-518 (EDERPKRSHVKNGEVG) the composition is skewed to basic and acidic residues. Phosphoserine is present on residues S524, S526, S528, S530, S532, S549, and S551. Over residues 533 to 560 (PRKRQKETSPRGRRRRSPSPPPTRRRRS) the composition is skewed to basic residues. T555 bears the Phosphothreonine mark. S560 and S562 each carry phosphoserine. The span at 567-592 (PRRRRTPTPPPRRRTPSPPPRRRSPS) shows a compositional bias: basic residues. T572, T574, and T581 each carry phosphothreonine. A Phosphoserine modification is found at S583. Low complexity predominate over residues 593-605 (PRRYSPPIQRRYS). At Y596 the chain carries Phosphotyrosine. 3 positions are modified to phosphoserine: S597, S605, and S607. Residue T614 is modified to Phosphothreonine. Residues S616, S626, S628, S636, and S638 each carry the phosphoserine modification. The segment covering 621–636 (PKRRASPSPPPKRRVS) has biased composition (basic residues). Positions 649-663 (TKRRSPSLSSKHRKG) are enriched in basic residues. Phosphoserine is present on residues S694, S695, S696, S705, S707, S713, and S715. Low complexity-rich tracts occupy residues 701–719 (RRGA…PSTR) and 736–759 (AASP…SPEP). Position 718 is a phosphothreonine (T718). S738, S740, S748, S752, S754, S756, S769, S773, S775, and S777 each carry phosphoserine. The segment covering 771-786 (VQSQSPSTNWSPAVPV) has biased composition (low complexity). T778 is subject to Phosphothreonine. Residues S781 and S791 each carry the phosphoserine modification. At T793 the chain carries Phosphothreonine. A phosphoserine mark is found at S795, S797, and S802. Basic residues predominate over residues 809 to 834 (KKKKKKKDKKHKKDKKHKKHKKHKKE). Residues 837-866 (VAAAAAAAVTPAAIAAATTTLAQEEPVAAP) show a composition bias toward low complexity. K869 participates in a covalent cross-link: Glycyl lysine isopeptide (Lys-Gly) (interchain with G-Cter in SUMO2). Residue T872 is modified to Phosphothreonine. Phosphoserine is present on S874. Over residues 882-892 (DLEKHLREKAL) the composition is skewed to basic and acidic residues. S901 bears the Phosphoserine mark.

This sequence belongs to the splicing factor SR family. Identified in the spliceosome C complex. Found in a pre-mRNA splicing complex with SFRS4, SFRS5, SNRP70, SNRPA1, SRRM1 and SRRM2. Found in a pre-mRNA exonic splicing enhancer (ESE) complex with SNRP70, SNRPA1, SRRM1 and TRA2B/SFRS10. Component of the minor spliceosome, which splices U12-type introns. Found in a mRNA splicing-dependent exon junction complex (EJC) with DEK, PRPF8, NCBP1, RBM8A, RNPS1, SRRM1 and ALYREF/THOC4. Interacts with DDX39B, CPSF1, RBM8A, RNPS1, and ALYREF/THOC4. Seems to be a compound of RNA export complexes that are released from speckles in a ATP-dependent manner. Phosphorylated on multiple serine and threonine residues by DYRK3 during the G2-to-M transition, after the nuclear-envelope breakdown. Phosphorylation by DYRK3 promotes disassembly of nuclear speckles. In terms of processing, citrullinated by PADI4.

It localises to the nucleus matrix. It is found in the nucleus speckle. Part of pre- and post-splicing multiprotein mRNP complexes. As a component of the minor spliceosome, involved in the splicing of U12-type introns in pre-mRNAs. Involved in numerous pre-mRNA processing events. Promotes constitutive and exonic splicing enhancer (ESE)-dependent splicing activation by bridging together sequence-specific (SR family proteins, SFRS4, SFRS5 and TRA2B/SFRS10) and basal snRNP (SNRP70 and SNRPA1) factors of the spliceosome. Stimulates mRNA 3'-end cleavage independently of the formation of an exon junction complex. Binds both pre-mRNA and spliced mRNA 20-25 nt upstream of exon-exon junctions. Binds RNA and DNA with low sequence specificity and has similar preference for either double- or single-stranded nucleic acid substrates. In Homo sapiens (Human), this protein is Serine/arginine repetitive matrix protein 1 (SRRM1).